Here is a 227-residue protein sequence, read N- to C-terminus: Isopentenyl-diphosphate delta-isomerase 2 (227 aa).

Lys-36 lines the substrate pocket. His-40 and His-51 together coordinate Mg(2+). The 151-residue stretch at 49–199 folds into the Nudix hydrolase domain; that stretch reads LLHRAFSVVL…EVKVTPWLRT (151 aa). 2 residues coordinate substrate: Arg-70 and Lys-74. The active site involves Ser-86. Residue Ser-87 participates in substrate binding. Mg(2+) contacts are provided by Glu-146 and Glu-148. The active site involves Glu-148. The Microbody targeting signal signature appears at 225 to 227; it reads HRV.

Belongs to the IPP isomerase type 1 family. Requires Mg(2+) as cofactor. As to expression, muscle-specific expression.

The protein resides in the peroxisome. The catalysed reaction is isopentenyl diphosphate = dimethylallyl diphosphate. It participates in isoprenoid biosynthesis; dimethylallyl diphosphate biosynthesis; dimethylallyl diphosphate from isopentenyl diphosphate: step 1/1. Catalyzes the 1,3-allylic rearrangement of the homoallylic substrate isopentenyl (IPP) to its highly electrophilic allylic isomer, dimethylallyl diphosphate (DMAPP). The sequence is that of Isopentenyl-diphosphate delta-isomerase 2 (IDI2) from Homo sapiens (Human).